Consider the following 151-residue polypeptide: F-box protein GID2 (151 aa).

A compositionally biased stretch (basic and acidic residues) spans 1 to 25 (MKRSTTDSDLAGDAHNETNKKMKST). A disordered region spans residues 1-27 (MKRSTTDSDLAGDAHNETNKKMKSTEE). The 47-residue stretch at 29–75 (EIGFSNLDENLVYEVLKHVDAKTLAMSSCVSKIWHKTAQDERLWELI) folds into the F-box domain.

In terms of assembly, part of some SCF(GID2) complex, which consist of SKP1B, CUL1 cullin, GID2/SLY1 and some RING box protein. Interacts directly with SKP1A and SKP1B. Interacts directly with DELLA proteins GAI, RGA, RGL1, RGL3 and probably RGL2. May have a higher affinity for phosphorylated DELLA proteins. Expressed in all tissues tested, including rosette leaves, green siliques, flowers, stems, cauline leaves and seedlings.

Its subcellular location is the nucleus. Its pathway is protein modification; protein ubiquitination. Essential component of the SCF-type E3 ligase complex, SCF(GID2), a complex that positively regulates the gibberellin signaling pathway. Upon gibberellin treatment, the SCF(GID2) complex mediates the ubiquitination and subsequent degradation of DELLA proteins (GAI, RGA and RGL2), some repressors of the gibberellin pathway, leading to activate the pathway. The sequence is that of F-box protein GID2 (GID2) from Arabidopsis thaliana (Mouse-ear cress).